Here is a 1400-residue protein sequence, read N- to C-terminus: DNA-directed RNA polymerase subunit beta' (1400 aa).

C71, C73, C86, and C89 together coordinate Zn(2+). 3 residues coordinate Mg(2+): D462, D464, and D466. 4 residues coordinate Zn(2+): C811, C885, C892, and C895.

The protein belongs to the RNA polymerase beta' chain family. In terms of assembly, the RNAP catalytic core consists of 2 alpha, 1 beta, 1 beta' and 1 omega subunit. When a sigma factor is associated with the core the holoenzyme is formed, which can initiate transcription. Mg(2+) serves as cofactor. The cofactor is Zn(2+).

The enzyme catalyses RNA(n) + a ribonucleoside 5'-triphosphate = RNA(n+1) + diphosphate. In terms of biological role, DNA-dependent RNA polymerase catalyzes the transcription of DNA into RNA using the four ribonucleoside triphosphates as substrates. The protein is DNA-directed RNA polymerase subunit beta' of Brucella ovis (strain ATCC 25840 / 63/290 / NCTC 10512).